The sequence spans 206 residues: CBS domain-containing protein CBSX3, mitochondrial (206 aa).

Residues 1 to 39 constitute a mitochondrion transit peptide; it reads MQGVIRSFVSGGNVVKGSVLQHLRVINPAIQPSVFCSRS. CBS domains lie at 61–127 and 136–194; these read MKSK…GRSS and MTEE…HREE.

It localises to the mitochondrion. The protein is CBS domain-containing protein CBSX3, mitochondrial (CBSX3) of Arabidopsis thaliana (Mouse-ear cress).